The following is a 624-amino-acid chain: Penicillin-binding protein 4 (624 aa).

The signal sequence occupies residues 1–21; sequence MTMLRKIIGWILLLCIIPLFA. Residue Glu-96 is the Proton donor; for transglycosylase activity of the active site. The active-site Acyl-ester intermediate; for transpeptidase activity is Ser-388.

The protein in the N-terminal section; belongs to the glycosyltransferase 51 family. This sequence in the C-terminal section; belongs to the transpeptidase family. The N-terminus is blocked.

It localises to the cell membrane. The catalysed reaction is [GlcNAc-(1-&gt;4)-Mur2Ac(oyl-L-Ala-gamma-D-Glu-L-Lys-D-Ala-D-Ala)](n)-di-trans,octa-cis-undecaprenyl diphosphate + beta-D-GlcNAc-(1-&gt;4)-Mur2Ac(oyl-L-Ala-gamma-D-Glu-L-Lys-D-Ala-D-Ala)-di-trans,octa-cis-undecaprenyl diphosphate = [GlcNAc-(1-&gt;4)-Mur2Ac(oyl-L-Ala-gamma-D-Glu-L-Lys-D-Ala-D-Ala)](n+1)-di-trans,octa-cis-undecaprenyl diphosphate + di-trans,octa-cis-undecaprenyl diphosphate + H(+). It carries out the reaction Preferential cleavage: (Ac)2-L-Lys-D-Ala-|-D-Ala. Also transpeptidation of peptidyl-alanyl moieties that are N-acyl substituents of D-alanine.. Functionally, cell wall formation. Synthesis of cross-linked peptidoglycan from the lipid intermediates. The enzyme has a penicillin-insensitive transglycosylase N-terminal domain (formation of linear glycan strands) and a penicillin-sensitive transpeptidase C-terminal domain (cross-linking of the peptide subunits). Has a partially redundant function with PBP-2A (pbpA) during spore outgrowth. The sequence is that of Penicillin-binding protein 4 from Bacillus subtilis (strain 168).